A 173-amino-acid chain; its full sequence is Thaumatin-like protein PWIR2 (173 aa).

The first 20 residues, 1–20, serve as a signal peptide directing secretion; sequence MATSPVLFLLLAVFAAGASA.

Belongs to the thaumatin family.

The protein is Thaumatin-like protein PWIR2 of Triticum aestivum (Wheat).